Consider the following 494-residue polypeptide: Probable cytosol aminopeptidase (494 aa).

Mn(2+) contacts are provided by lysine 260 and aspartate 265. The active site involves lysine 272. 3 residues coordinate Mn(2+): aspartate 283, aspartate 342, and glutamate 344. Arginine 346 is a catalytic residue.

It belongs to the peptidase M17 family. It depends on Mn(2+) as a cofactor.

It localises to the cytoplasm. The enzyme catalyses Release of an N-terminal amino acid, Xaa-|-Yaa-, in which Xaa is preferably Leu, but may be other amino acids including Pro although not Arg or Lys, and Yaa may be Pro. Amino acid amides and methyl esters are also readily hydrolyzed, but rates on arylamides are exceedingly low.. It carries out the reaction Release of an N-terminal amino acid, preferentially leucine, but not glutamic or aspartic acids.. Functionally, presumably involved in the processing and regular turnover of intracellular proteins. Catalyzes the removal of unsubstituted N-terminal amino acids from various peptides. This Bacillus cereus (strain ATCC 10987 / NRS 248) protein is Probable cytosol aminopeptidase.